Consider the following 345-residue polypeptide: MTQAGTRSTNGDTENTDILAQARQQVLERGEGLSRDQVLQMLWLPDDRLEELLALAHDVRMRWCGPEVEIEGIISLKTGGCPEDCHFCSQSGLFMSPVRSAWLDIRSLVEAAKQTAKSGATEFCIVAAVRGPDERLMSQVAAGIEAIRNEVEINIACSLGMLTVEQVEQLSGIGVHRYNHNLETARSFFTNVVTTHTWEERWQTLSMVRDAGMEVCCGGILGMGETVEQRAEFALELAELGPDEVPLNFLNPRPGTPFGALEVMPPSEALKSVAAFRLALPRTILRFAGGREITLGDLGAKQGMLGGINAVIVGNYLTTLGRPAEADLRLLDDLQMPIKALNASL.

The 226-residue stretch at Pro66–Arg291 folds into the Radical SAM core domain. [4Fe-4S] cluster contacts are provided by Cys81, Cys85, and Cys88. [2Fe-2S] cluster is bound by residues Cys124, Cys157, Cys216, and Arg286.

This sequence belongs to the radical SAM superfamily. Biotin synthase family. Homodimer. The cofactor is [4Fe-4S] cluster. [2Fe-2S] cluster serves as cofactor.

It carries out the reaction (4R,5S)-dethiobiotin + (sulfur carrier)-SH + 2 reduced [2Fe-2S]-[ferredoxin] + 2 S-adenosyl-L-methionine = (sulfur carrier)-H + biotin + 2 5'-deoxyadenosine + 2 L-methionine + 2 oxidized [2Fe-2S]-[ferredoxin]. It participates in cofactor biosynthesis; biotin biosynthesis; biotin from 7,8-diaminononanoate: step 2/2. Functionally, catalyzes the conversion of dethiobiotin (DTB) to biotin by the insertion of a sulfur atom into dethiobiotin via a radical-based mechanism. The sequence is that of Biotin synthase from Mycobacterium leprae (strain Br4923).